The following is a 532-amino-acid chain: Bifunctional purine biosynthesis protein PurH (532 aa).

The MGS-like domain occupies 1–147 (MAKIKRALIS…KNYRSVTVVT (147 aa)).

It belongs to the PurH family.

It carries out the reaction (6R)-10-formyltetrahydrofolate + 5-amino-1-(5-phospho-beta-D-ribosyl)imidazole-4-carboxamide = 5-formamido-1-(5-phospho-D-ribosyl)imidazole-4-carboxamide + (6S)-5,6,7,8-tetrahydrofolate. It catalyses the reaction IMP + H2O = 5-formamido-1-(5-phospho-D-ribosyl)imidazole-4-carboxamide. It participates in purine metabolism; IMP biosynthesis via de novo pathway; 5-formamido-1-(5-phospho-D-ribosyl)imidazole-4-carboxamide from 5-amino-1-(5-phospho-D-ribosyl)imidazole-4-carboxamide (10-formyl THF route): step 1/1. Its pathway is purine metabolism; IMP biosynthesis via de novo pathway; IMP from 5-formamido-1-(5-phospho-D-ribosyl)imidazole-4-carboxamide: step 1/1. In Magnetococcus marinus (strain ATCC BAA-1437 / JCM 17883 / MC-1), this protein is Bifunctional purine biosynthesis protein PurH.